The following is a 435-amino-acid chain: AP-2 complex subunit mu (435 aa).

The region spanning 170-434 is the MHD domain; sequence RNELFLDVLE…IGRSGIYETR (265 aa). Residues lysine 341, lysine 345, and lysine 354 each coordinate a 1,2-diacyl-sn-glycero-3-phospho-(1D-myo-inositol-3,4,5-trisphosphate).

This sequence belongs to the adaptor complexes medium subunit family. Adaptor protein complex 2 (AP-2) is a heterotetramer composed of two large adaptins (alpha-type subunit and beta-type subunit), a medium adaptin (mu-type subunit) and a small adaptin (sigma-type subunit).

The protein localises to the cell membrane. The protein resides in the membrane. It localises to the coated pit. Its function is as follows. Component of the adaptor complexes which link clathrin to receptors in coated vesicles. Clathrin-associated protein complexes are believed to interact with the cytoplasmic tails of membrane proteins, leading to their selection and concentration. AP50 is a subunit of the plasma membrane adaptor. The complex binds polyphosphoinositide-containing lipids. In Xenopus tropicalis (Western clawed frog), this protein is AP-2 complex subunit mu (ap2m1).